The primary structure comprises 482 residues: ATP synthase subunit beta (482 aa).

161–168 (GGAGVGKT) contributes to the ATP binding site.

It belongs to the ATPase alpha/beta chains family. F-type ATPases have 2 components, CF(1) - the catalytic core - and CF(0) - the membrane proton channel. CF(1) has five subunits: alpha(3), beta(3), gamma(1), delta(1), epsilon(1). CF(0) has three main subunits: a(1), b(2) and c(9-12). The alpha and beta chains form an alternating ring which encloses part of the gamma chain. CF(1) is attached to CF(0) by a central stalk formed by the gamma and epsilon chains, while a peripheral stalk is formed by the delta and b chains.

Its subcellular location is the cell inner membrane. The enzyme catalyses ATP + H2O + 4 H(+)(in) = ADP + phosphate + 5 H(+)(out). Functionally, produces ATP from ADP in the presence of a proton gradient across the membrane. The catalytic sites are hosted primarily by the beta subunits. The chain is ATP synthase subunit beta from Anaeromyxobacter dehalogenans (strain 2CP-C).